The sequence spans 299 residues: Dye-decolorizing peroxidase YfeX (299 aa).

Residue His215 participates in heme binding.

It belongs to the DyP-type peroxidase family. Heme b is required as a cofactor.

The protein resides in the cytoplasm. Its function is as follows. Has both general peroxidase activity and dye-decolorizing activity. Can catalyze the oxidation of 2,2'-azino-bis(3-ethylbenzothiazoline-6-sulphonic acid) (ABTS), and the phenolic compounds guaiacol and catechol. Also decolorizes the anthraquinone dye reactive blue 19 (RB19). This Escherichia coli O157:H7 protein is Dye-decolorizing peroxidase YfeX.